We begin with the raw amino-acid sequence, 541 residues long: ATP synthase subunit beta (541 aa).

The disordered stretch occupies residues 1–65 (MAKAVTSSKG…TPVKKEERAK (65 aa)). Basic and acidic residues-rich tracts occupy residues 25–36 (VKKDASKSKDAS) and 52–65 (AAKDTPVKKEERAK). 214–221 (GGAGVGKT) contributes to the ATP binding site.

This sequence belongs to the ATPase alpha/beta chains family. In terms of assembly, F-type ATPases have 2 components, CF(1) - the catalytic core - and CF(0) - the membrane proton channel. CF(1) has five subunits: alpha(3), beta(3), gamma(1), delta(1), epsilon(1). CF(0) has three main subunits: a(1), b(2) and c(9-12). The alpha and beta chains form an alternating ring which encloses part of the gamma chain. CF(1) is attached to CF(0) by a central stalk formed by the gamma and epsilon chains, while a peripheral stalk is formed by the delta and b chains.

The protein localises to the cell inner membrane. It carries out the reaction ATP + H2O + 4 H(+)(in) = ADP + phosphate + 5 H(+)(out). Functionally, produces ATP from ADP in the presence of a proton gradient across the membrane. The catalytic sites are hosted primarily by the beta subunits. The polypeptide is ATP synthase subunit beta (Bartonella tribocorum (strain CIP 105476 / IBS 506)).